The primary structure comprises 307 residues: 4-hydroxythreonine-4-phosphate dehydrogenase (307 aa).

His-126 and Thr-127 together coordinate substrate. A divalent metal cation is bound by residues His-156, His-195, and His-251. Residues Lys-259, Asn-268, and Arg-277 each coordinate substrate.

It belongs to the PdxA family. As to quaternary structure, homodimer. It depends on Zn(2+) as a cofactor. Mg(2+) serves as cofactor. Requires Co(2+) as cofactor.

Its subcellular location is the cytoplasm. It carries out the reaction 4-(phosphooxy)-L-threonine + NAD(+) = 3-amino-2-oxopropyl phosphate + CO2 + NADH. Its pathway is cofactor biosynthesis; pyridoxine 5'-phosphate biosynthesis; pyridoxine 5'-phosphate from D-erythrose 4-phosphate: step 4/5. In terms of biological role, catalyzes the NAD(P)-dependent oxidation of 4-(phosphooxy)-L-threonine (HTP) into 2-amino-3-oxo-4-(phosphooxy)butyric acid which spontaneously decarboxylates to form 3-amino-2-oxopropyl phosphate (AHAP). This Helicobacter pylori (strain HPAG1) protein is 4-hydroxythreonine-4-phosphate dehydrogenase.